We begin with the raw amino-acid sequence, 201 residues long: UPF0301 protein RHE_CH00966 (201 aa).

The protein belongs to the UPF0301 (AlgH) family.

The sequence is that of UPF0301 protein RHE_CH00966 from Rhizobium etli (strain ATCC 51251 / DSM 11541 / JCM 21823 / NBRC 15573 / CFN 42).